Here is a 158-residue protein sequence, read N- to C-terminus: Large ribosomal subunit protein uL16 (158 aa).

Belongs to the universal ribosomal protein uL16 family. In terms of assembly, part of the 50S ribosomal subunit.

Its function is as follows. Binds 23S rRNA and is also seen to make contacts with the A and possibly P site tRNAs. This is Large ribosomal subunit protein uL16 from Parasynechococcus marenigrum (strain WH8102).